Consider the following 155-residue polypeptide: Endoribonuclease YbeY (155 aa).

Residues His114, His118, and His124 each coordinate Zn(2+).

The protein belongs to the endoribonuclease YbeY family. Zn(2+) serves as cofactor.

It localises to the cytoplasm. Its function is as follows. Single strand-specific metallo-endoribonuclease involved in late-stage 70S ribosome quality control and in maturation of the 3' terminus of the 16S rRNA. In Escherichia coli O6:K15:H31 (strain 536 / UPEC), this protein is Endoribonuclease YbeY.